The chain runs to 298 residues: ATP synthase gamma chain (298 aa).

Belongs to the ATPase gamma chain family. In terms of assembly, F-type ATPases have 2 components, CF(1) - the catalytic core - and CF(0) - the membrane proton channel. CF(1) has five subunits: alpha(3), beta(3), gamma(1), delta(1), epsilon(1). CF(0) has three main subunits: a, b and c.

Its subcellular location is the cell inner membrane. Produces ATP from ADP in the presence of a proton gradient across the membrane. The gamma chain is believed to be important in regulating ATPase activity and the flow of protons through the CF(0) complex. The sequence is that of ATP synthase gamma chain from Francisella philomiragia subsp. philomiragia (strain ATCC 25017 / CCUG 19701 / FSC 153 / O#319-036).